The chain runs to 201 residues: Large ribosomal subunit protein uL4 (201 aa).

The interval 44–68 is disordered; the sequence is KAQKTRSEVAGTTKKSKKQKGGGAR.

It belongs to the universal ribosomal protein uL4 family. In terms of assembly, part of the 50S ribosomal subunit.

Functionally, one of the primary rRNA binding proteins, this protein initially binds near the 5'-end of the 23S rRNA. It is important during the early stages of 50S assembly. It makes multiple contacts with different domains of the 23S rRNA in the assembled 50S subunit and ribosome. In terms of biological role, forms part of the polypeptide exit tunnel. The protein is Large ribosomal subunit protein uL4 of Xanthomonas axonopodis pv. citri (strain 306).